Reading from the N-terminus, the 36-residue chain is Cytochrome b6-f complex subunit 5 (36 aa).

A helical membrane pass occupies residues 5 to 25 (LLSGIVLGLIPITILGLLMAA).

This sequence belongs to the PetG family. The 4 large subunits of the cytochrome b6-f complex are cytochrome b6, subunit IV (17 kDa polypeptide, PetD), cytochrome f and the Rieske protein, while the 4 small subunits are PetG, PetL, PetM and PetN. The complex functions as a dimer.

Its subcellular location is the plastid. It is found in the chloroplast thylakoid membrane. Functionally, component of the cytochrome b6-f complex, which mediates electron transfer between photosystem II (PSII) and photosystem I (PSI), cyclic electron flow around PSI, and state transitions. PetG is required for either the stability or assembly of the cytochrome b6-f complex. In Cyanidioschyzon merolae (strain NIES-3377 / 10D) (Unicellular red alga), this protein is Cytochrome b6-f complex subunit 5.